The sequence spans 139 residues: D-ribose pyranase (139 aa).

Catalysis depends on H20, which acts as the Proton donor. Substrate is bound by residues D28, H106, and 128–130 (YAN).

The protein belongs to the RbsD / FucU family. RbsD subfamily. Homodecamer.

The protein resides in the cytoplasm. It carries out the reaction beta-D-ribopyranose = beta-D-ribofuranose. It functions in the pathway carbohydrate metabolism; D-ribose degradation; D-ribose 5-phosphate from beta-D-ribopyranose: step 1/2. Catalyzes the interconversion of beta-pyran and beta-furan forms of D-ribose. The chain is D-ribose pyranase from Salmonella paratyphi B (strain ATCC BAA-1250 / SPB7).